We begin with the raw amino-acid sequence, 352 residues long: Ion-translocating oxidoreductase complex subunit D (352 aa).

Transmembrane regions (helical) follow at residues 20–40 (IMLL…WFFG), 42–62 (GTLF…AIVL), 69–91 (VASH…SIPP), and 123–143 (PAMI…TSWL). At Thr187 the chain carries FMN phosphoryl threonine. Helical transmembrane passes span 215-235 (LAGV…VFLL), 242-262 (WHIP…GWLF), 267-287 (LASP…FFIL), 301-321 (LIFG…GGYP), and 322-342 (DGVA…DYYT).

Belongs to the NqrB/RnfD family. The complex is composed of six subunits: RsxA, RsxB, RsxC, RsxD, RsxE and RsxG. Requires FMN as cofactor.

Its subcellular location is the cell inner membrane. Functionally, part of a membrane-bound complex that couples electron transfer with translocation of ions across the membrane. Required to maintain the reduced state of SoxR. The chain is Ion-translocating oxidoreductase complex subunit D from Salmonella typhi.